Reading from the N-terminus, the 226-residue chain is Transcriptional regulatory protein DpiA (226 aa).

The 117-residue stretch at 6-122 (TLLIVEDETP…RLGQTLTRFR (117 aa)) folds into the Response regulatory domain. Aspartate 57 bears the 4-aspartylphosphate mark. Residues 180–199 (AETVAQALTISRTTARRYLE) constitute a DNA-binding region (H-T-H motif).

Post-translationally, phosphorylated and activated by DpiB.

It localises to the cytoplasm. In terms of biological role, member of the two-component regulatory system DpiA/DpiB, which is essential for expression of citrate-specific fermentation genes and genes involved in plasmid inheritance. Could be involved in response to both the presence of citrate and external redox conditions. The sequence is that of Transcriptional regulatory protein DpiA (dpiA) from Escherichia coli O157:H7.